Consider the following 527-residue polypeptide: Catalase (527 aa).

Positions 1 to 22 (MADNRDPASDQMKHWKEQRAAQ) are enriched in basic and acidic residues. Residues 1-42 (MADNRDPASDQMKHWKEQRAAQKPDVLTTGGGNPVGDKLNSL) are disordered. Alanine 2 carries the post-translational modification Blocked amino end (Ala); alternate. N-acetylalanine; alternate is present on alanine 2. The residue at position 9 (serine 9) is a Phosphoserine. Lysine 13 bears the N6-succinyllysine mark. Catalysis depends on residues histidine 75 and asparagine 148. NADP(+)-binding residues include histidine 194, phenylalanine 198, serine 201, arginine 203, asparagine 213, and tyrosine 215. N6-succinyllysine is present on lysine 221. At lysine 233 the chain carries N6-acetyllysine. NADP(+)-binding residues include lysine 237, tryptophan 303, and histidine 305. Residue tyrosine 358 coordinates heme. Phosphoserine is present on residues serine 417 and serine 434. NADP(+)-binding residues include glutamine 442, threonine 445, and phenylalanine 446. 2 positions are modified to N6-acetyllysine; alternate: lysine 449 and lysine 480. Lysine 449 and lysine 480 each carry N6-succinyllysine; alternate. Lysine 499 carries the post-translational modification N6-acetyllysine. At threonine 511 the chain carries Phosphothreonine. Phosphoserine is present on serine 517. The Microbody targeting signal; atypical signature appears at 524–527 (KANL).

Belongs to the catalase family. Homotetramer. Interacts (via microbody targeting signal) with PEX5, monomeric form interacts with PEX5, leading to its translocation into peroxisomes. It depends on heme as a cofactor. NADP(+) serves as cofactor.

Its subcellular location is the peroxisome matrix. It carries out the reaction 2 H2O2 = O2 + 2 H2O. In terms of biological role, catalyzes the degradation of hydrogen peroxide (H(2)O(2)) generated by peroxisomal oxidases to water and oxygen, thereby protecting cells from the toxic effects of hydrogen peroxide. Promotes growth of cells including T-cells, B-cells, myeloid leukemia cells, melanoma cells, mastocytoma cells and normal and transformed fibroblast cells. This Bos taurus (Bovine) protein is Catalase (CAT).